We begin with the raw amino-acid sequence, 693 residues long: Polyribonucleotide nucleotidyltransferase (693 aa).

Residues aspartate 486 and aspartate 492 each coordinate Mg(2+). Residues proline 553–isoleucine 612 form the KH domain. The region spanning glycine 622–lysine 690 is the S1 motif domain.

This sequence belongs to the polyribonucleotide nucleotidyltransferase family. In terms of assembly, component of the RNA degradosome, which is a multiprotein complex involved in RNA processing and mRNA degradation. Mg(2+) is required as a cofactor.

Its subcellular location is the cytoplasm. The enzyme catalyses RNA(n+1) + phosphate = RNA(n) + a ribonucleoside 5'-diphosphate. Its function is as follows. Involved in mRNA degradation. Catalyzes the phosphorolysis of single-stranded polyribonucleotides processively in the 3'- to 5'-direction. The protein is Polyribonucleotide nucleotidyltransferase of Buchnera aphidicola subsp. Baizongia pistaciae (strain Bp).